A 275-amino-acid chain; its full sequence is 2,3,4,5-tetrahydropyridine-2,6-dicarboxylate N-succinyltransferase (275 aa).

It belongs to the transferase hexapeptide repeat family.

The protein resides in the cytoplasm. It carries out the reaction (S)-2,3,4,5-tetrahydrodipicolinate + succinyl-CoA + H2O = (S)-2-succinylamino-6-oxoheptanedioate + CoA. Its pathway is amino-acid biosynthesis; L-lysine biosynthesis via DAP pathway; LL-2,6-diaminopimelate from (S)-tetrahydrodipicolinate (succinylase route): step 1/3. This is 2,3,4,5-tetrahydropyridine-2,6-dicarboxylate N-succinyltransferase from Paraburkholderia phytofirmans (strain DSM 17436 / LMG 22146 / PsJN) (Burkholderia phytofirmans).